A 262-amino-acid chain; its full sequence is NADP-dependent mannitol dehydrogenase (262 aa).

Residues Ile23, Asp69, Asn96, and Arg129 each contribute to the NADP(+) site. Ser149 (proton donor) is an active-site residue. Tyr169, Lys173, Val202, Thr204, and Gln206 together coordinate NADP(+). The Proton acceptor role is filled by Tyr169. The Lowers pKa of active site Tyr role is filled by Lys173.

Belongs to the short-chain dehydrogenases/reductases (SDR) family. Homotetramer.

The catalysed reaction is D-mannitol + NADP(+) = D-fructose + NADPH + H(+). The protein is NADP-dependent mannitol dehydrogenase (mtdH) of Agaricus bisporus (White button mushroom).